The primary structure comprises 389 residues: Methylthioribose-1-phosphate isomerase (389 aa).

Asp-258 acts as the Proton donor in catalysis.

This sequence belongs to the eIF-2B alpha/beta/delta subunits family. MtnA subfamily.

The protein resides in the cytoplasm. It localises to the nucleus. It carries out the reaction 5-(methylsulfanyl)-alpha-D-ribose 1-phosphate = 5-(methylsulfanyl)-D-ribulose 1-phosphate. Its pathway is amino-acid biosynthesis; L-methionine biosynthesis via salvage pathway; L-methionine from S-methyl-5-thio-alpha-D-ribose 1-phosphate: step 1/6. Catalyzes the interconversion of methylthioribose-1-phosphate (MTR-1-P) into methylthioribulose-1-phosphate (MTRu-1-P). This chain is Methylthioribose-1-phosphate isomerase, found in Chaetomium globosum (strain ATCC 6205 / CBS 148.51 / DSM 1962 / NBRC 6347 / NRRL 1970) (Soil fungus).